A 531-amino-acid polypeptide reads, in one-letter code: Cytochrome P450 monooxygenase peniB (531 aa).

Residues 30 to 48 (ILSIAAVVFLGYLLLRPLF) traverse the membrane as a helical segment. Residue Cys-445 participates in heme binding.

The protein belongs to the cytochrome P450 family. It depends on heme as a cofactor.

The protein resides in the membrane. The enzyme catalyses silphinene-15-oate + 2 reduced [NADPH--hemoprotein reductase] + 2 O2 = gamma-lactone-2-keto[5.5.5.5]fenestrane + 2 oxidized [NADPH--hemoprotein reductase] + 3 H2O + H(+). The protein operates within secondary metabolite biosynthesis; terpenoid biosynthesis. Functionally, cytochrome P450 monooxygenase; part of the gene cluster that mediates the biosynthesis of penifulvin A, a potent insecticidal sesquiterpene that features a [5.5.5.6]dioxafenestrane ring. Within the pathway, peniB catalyzes the multi-step oxidation of silphinene to synthesize gamma-lactone-2-keto[5.5.5.5]fenestrane, including oxidation of the C15 methylgroup in silphinene to form silphinene-15-oic acid, activationof the C1-C2 double bond to form the gamma-lactone-2-hydroxy[5.5.5.5]fenestrane, and dehydrogenation of the hydroxy group at C2 of gamma-lactone-2-hydroxy[5.5.5.5]fenestrane to generate gamma-lactone-2-keto[5.5.5.5]fenestrane. The first step of the pathway is performed by the sesquiterpene cyclase peniA that generates the angular triquinane scaffold silphinene via cyclization of the linear farnesyl pyrophosphate (FPP). The cytochrome P450 monooxygenase peniB and the flavin-dependent monooxygenase peniC then catalyze a series of oxidation reactions to transform silphinene into penifulvin A. This is Cytochrome P450 monooxygenase peniB from Penicillium patulum (Penicillium griseofulvum).